Consider the following 384-residue polypeptide: PqqA peptide cyclase (384 aa).

A Radical SAM core domain is found at 14 to 230; sequence IPAPVGLLAE…EAARERLKGQ (217 aa). Residues Cys28, Cys32, and Cys35 each contribute to the [4Fe-4S] cluster site.

Belongs to the radical SAM superfamily. PqqE family. In terms of assembly, interacts with PqqD. The interaction is necessary for activity of PqqE. It depends on [4Fe-4S] cluster as a cofactor.

The enzyme catalyses [PQQ precursor protein] + S-adenosyl-L-methionine = E-Y cross-linked-[PQQ precursor protein] + 5'-deoxyadenosine + L-methionine + H(+). It functions in the pathway cofactor biosynthesis; pyrroloquinoline quinone biosynthesis. Its function is as follows. Catalyzes the cross-linking of a glutamate residue and a tyrosine residue in the PqqA protein as part of the biosynthesis of pyrroloquinoline quinone (PQQ). The protein is PqqA peptide cyclase of Methylorubrum extorquens (strain CM4 / NCIMB 13688) (Methylobacterium extorquens).